The sequence spans 324 residues: Beta-ketoacyl-[acyl-carrier-protein] synthase III (324 aa).

Residues Cys-112 and His-251 contribute to the active site. Positions 252–256 (QANIR) are ACP-binding. Asn-281 is a catalytic residue.

It belongs to the thiolase-like superfamily. FabH family. As to quaternary structure, homodimer.

It localises to the cytoplasm. The enzyme catalyses malonyl-[ACP] + acetyl-CoA + H(+) = 3-oxobutanoyl-[ACP] + CO2 + CoA. It functions in the pathway lipid metabolism; fatty acid biosynthesis. Catalyzes the condensation reaction of fatty acid synthesis by the addition to an acyl acceptor of two carbons from malonyl-ACP. Catalyzes the first condensation reaction which initiates fatty acid synthesis and may therefore play a role in governing the total rate of fatty acid production. Possesses both acetoacetyl-ACP synthase and acetyl transacylase activities. Its substrate specificity determines the biosynthesis of branched-chain and/or straight-chain of fatty acids. The polypeptide is Beta-ketoacyl-[acyl-carrier-protein] synthase III (Desulfotalea psychrophila (strain LSv54 / DSM 12343)).